The sequence spans 740 residues: Catalase-peroxidase (740 aa).

Positions 102–229 (WHAAGTYRTG…LAAIQMGLIY (128 aa)) form a cross-link, tryptophyl-tyrosyl-methioninium (Trp-Tyr) (with M-256). His-103 functions as the Proton acceptor in the catalytic mechanism. The disordered stretch occupies residues 111–130 (GDGRGGSSSGQQRFAPLNSW). Positions 229 to 256 (YVNPEGPGGDPHDPEGMARDMRETFARM) form a cross-link, tryptophyl-tyrosyl-methioninium (Tyr-Met) (with W-102). His-271 contacts heme b.

The protein belongs to the peroxidase family. Peroxidase/catalase subfamily. As to quaternary structure, homodimer or homotetramer. The cofactor is heme b. In terms of processing, formation of the three residue Trp-Tyr-Met cross-link is important for the catalase, but not the peroxidase activity of the enzyme.

The enzyme catalyses H2O2 + AH2 = A + 2 H2O. It carries out the reaction 2 H2O2 = O2 + 2 H2O. Bifunctional enzyme with both catalase and broad-spectrum peroxidase activity. In Erythrobacter litoralis (strain HTCC2594), this protein is Catalase-peroxidase.